The following is an 88-amino-acid chain: Early E1B 9 kDa protein (88 aa).

The tract at residues 23–88 (NMEGSQDEDN…DLFPELRRLP (66 aa)) is disordered. The segment covering 34-44 (RLLASAASGSS) has biased composition (low complexity).

The chain is Early E1B 9 kDa protein from Homo sapiens (Human).